Here is a 997-residue protein sequence, read N- to C-terminus: Bifunctional purine synthesis protein purC/E (997 aa).

Positions 1 to 305 (MTTAINNNIV…NNNNNNNNNS (305 aa)) are SAICAR synthetase. Composition is skewed to low complexity over residues 294 to 323 (LNNN…SLPN), 342 to 355 (QQQS…NVNS), and 524 to 536 (TSTS…TTTS). 4 disordered regions span residues 294–355 (LNNN…NVNS), 518–538 (IPVD…TSNA), 550–569 (INSN…QQQT), and 575–604 (PTII…SSII). The segment at 305 to 997 (SNNNNNNTSS…GRKMGHVTQQ (693 aa)) is AIR carboxylase. Over residues 575-597 (PTIINTPTPVRSSVSRSQSPLPS) the composition is skewed to low complexity. ATP contacts are provided by residues Arg-728, Lys-768, Gln-779, 807 to 810 (EQYI), and Glu-815. Residues 732 to 927 (KTFIQSLDIP…QFEQLIRCVC (196 aa)) enclose the ATP-grasp domain. Glu-880 and Glu-898 together coordinate Mg(2+). 897–898 (NE) contacts ATP.

This sequence in the N-terminal section; belongs to the SAICAR synthetase family. It in the C-terminal section; belongs to the AIR carboxylase family. Class I subfamily. Mg(2+) serves as cofactor. It depends on Mn(2+) as a cofactor.

It catalyses the reaction 5-amino-1-(5-phospho-D-ribosyl)imidazole-4-carboxylate + L-aspartate + ATP = (2S)-2-[5-amino-1-(5-phospho-beta-D-ribosyl)imidazole-4-carboxamido]succinate + ADP + phosphate + 2 H(+). The enzyme catalyses 5-amino-1-(5-phospho-D-ribosyl)imidazole-4-carboxylate + H(+) = 5-amino-1-(5-phospho-beta-D-ribosyl)imidazole + CO2. It participates in purine metabolism; IMP biosynthesis via de novo pathway; 5-amino-1-(5-phospho-D-ribosyl)imidazole-4-carboxylate from 5-amino-1-(5-phospho-D-ribosyl)imidazole (carboxylase route): step 1/1. It functions in the pathway purine metabolism; IMP biosynthesis via de novo pathway; 5-amino-1-(5-phospho-D-ribosyl)imidazole-4-carboxamide from 5-amino-1-(5-phospho-D-ribosyl)imidazole-4-carboxylate: step 1/2. In terms of biological role, bifunctional enzyme involved in de novo IMP synthesis, an essential step for de nove purine synthesis. The polypeptide is Bifunctional purine synthesis protein purC/E (purC/E) (Dictyostelium discoideum (Social amoeba)).